A 120-amino-acid chain; its full sequence is Large ribosomal subunit protein uL18 (120 aa).

This sequence belongs to the universal ribosomal protein uL18 family. Part of the 50S ribosomal subunit; part of the 5S rRNA/L5/L18/L25 subcomplex. Contacts the 5S and 23S rRNAs.

In terms of biological role, this is one of the proteins that bind and probably mediate the attachment of the 5S RNA into the large ribosomal subunit, where it forms part of the central protuberance. This Rhodospirillum centenum (strain ATCC 51521 / SW) protein is Large ribosomal subunit protein uL18.